The chain runs to 728 residues: Protein psiK (728 aa).

The signal sequence occupies residues 1-20 (MKKTFIFLYCVVLFISTTLA). The Extracellular portion of the chain corresponds to 21-666 (VEMKKTQDFN…FICKTAAVVS (646 aa)). Residues Asn61, Asn74, and Asn104 are each glycosylated (N-linked (GlcNAc...) asparagine). Residues 118-266 (MNLDDKSNYF…YDFCGVCTGN (149 aa)) form the PA14 domain. Residues Asn272, Asn326, Asn335, Asn438, Asn543, and Asn638 are each glycosylated (N-linked (GlcNAc...) asparagine). A helical transmembrane segment spans residues 667-687 (VGVAVGVAVGGAIALGVFIFA). Topologically, residues 688–728 (GKKGYDYWKASQGVTMATSNANPLYESNPSGGENPIYTSPN) are cytoplasmic.

This sequence belongs to the prespore-cell-inducing factor family.

Its subcellular location is the membrane. In Dictyostelium discoideum (Social amoeba), this protein is Protein psiK (psiK).